We begin with the raw amino-acid sequence, 973 residues long: Putative cell agglutination protein pfl3 (973 aa).

A signal peptide spans Met1 to Ala24. 7 N-linked (GlcNAc...) asparagine glycosylation sites follow: Asn75, Asn96, Asn147, Asn171, Asn184, Asn218, and Asn253. Repeat copies occupy residues Gly198–Ala232, Gly233–Ala267, Gly268–Ala302, Gly303–Ala337, Gly338–Ala372, Gly373–Ala407, Gly408–Ala442, Gly443–Ala477, Gly478–Ala512, Gly513–Ala547, Gly548–Ala582, Gly583–Ala617, Gly618–Ala652, Gly653–Ala687, Gly688–Ala722, Gly723–Ala757, Gly758–Ala792, and Gly793–Leu828. Residues Gly198–Leu828 form an 18 X 35 AA approximate tandem repeats region. Asn352 and Asn393 each carry an N-linked (GlcNAc...) asparagine glycan. Residues Thr820 to Leu973 form the DIPSY domain. A glycan (N-linked (GlcNAc...) asparagine) is linked at Asn848.

Belongs to the mam3/map4 family.

Its subcellular location is the cell surface. May be involved in agglutination during conjugation or other aspects of colony formation. Induces flocculation when overexpressed. This is Putative cell agglutination protein pfl3 from Schizosaccharomyces pombe (strain 972 / ATCC 24843) (Fission yeast).